The sequence spans 448 residues: Amino-acid acetyltransferase (448 aa).

Residues 295–433 (EQIRRANIND…KQVLYNYQRR (139 aa)) enclose the N-acetyltransferase domain.

The protein belongs to the acetyltransferase family. ArgA subfamily. As to quaternary structure, homohexamer.

Its subcellular location is the cytoplasm. The enzyme catalyses L-glutamate + acetyl-CoA = N-acetyl-L-glutamate + CoA + H(+). It functions in the pathway amino-acid biosynthesis; L-arginine biosynthesis; N(2)-acetyl-L-ornithine from L-glutamate: step 1/4. The sequence is that of Amino-acid acetyltransferase from Photorhabdus laumondii subsp. laumondii (strain DSM 15139 / CIP 105565 / TT01) (Photorhabdus luminescens subsp. laumondii).